The chain runs to 35 residues: Malate dehydrogenase, mitochondrial (35 aa).

Asn-7 lines the NAD(+) pocket. Residue Arg-23 coordinates substrate.

The protein belongs to the LDH/MDH superfamily. MDH type 1 family. As to quaternary structure, homodimer.

Its subcellular location is the mitochondrion matrix. It catalyses the reaction (S)-malate + NAD(+) = oxaloacetate + NADH + H(+). The polypeptide is Malate dehydrogenase, mitochondrial (Capsicum annuum var. annuum (Red pepper)).